A 457-amino-acid polypeptide reads, in one-letter code: 3-isopropylmalate dehydratase large subunit (457 aa).

Cys-337, Cys-397, and Cys-400 together coordinate [4Fe-4S] cluster.

Belongs to the aconitase/IPM isomerase family. LeuC type 1 subfamily. In terms of assembly, heterodimer of LeuC and LeuD. [4Fe-4S] cluster is required as a cofactor.

The enzyme catalyses (2R,3S)-3-isopropylmalate = (2S)-2-isopropylmalate. It functions in the pathway amino-acid biosynthesis; L-leucine biosynthesis; L-leucine from 3-methyl-2-oxobutanoate: step 2/4. In terms of biological role, catalyzes the isomerization between 2-isopropylmalate and 3-isopropylmalate, via the formation of 2-isopropylmaleate. This chain is 3-isopropylmalate dehydratase large subunit, found in Oenococcus oeni (strain ATCC BAA-331 / PSU-1).